The sequence spans 295 residues: Small ribosomal subunit protein uS2 (295 aa).

Residues 263–295 are disordered; the sequence is KKFSKTKNIDEETNTEFEKALNDADENKNSDNA. Positions 278-295 are enriched in basic and acidic residues; sequence EFEKALNDADENKNSDNA.

It belongs to the universal ribosomal protein uS2 family.

In Rickettsia peacockii (strain Rustic), this protein is Small ribosomal subunit protein uS2.